Reading from the N-terminus, the 386-residue chain is MKLNPSLLTAAGLVSAQLASALPQASSSTVSPSPSPSATPGSFVTTSGLNFVIDGKTGYFAGSNSYWIGFQKNNDDVDLVFSHLQESGLKILRVWGFNDVNQKPTDGSVYYHLLADGTATVNEGEDGLQRLDYVVSSAEKHGIKLIINFVNFWDDYGGINAYVKAFGGSKEDFYTNDAMQAAYRAYIKAVISRYSDSTAIFAWELANEPRCQGCETTVLYNWIESTSQYIKSLDSKHLVCIGDEGFGLDTGSDGSYPYQYSEGSDFAKNLAIPTIDFGTFHLYPSSWGTTNDWGNGWVTSHGAACKEAGKPCLFEEYGVTSDHCAVEKPWQNTALNTTAISGDLYWQYGDQLSGGPSPDDGNTFYYGTDDFKCLVTDHIAAINSRN.

The N-terminal stretch at 1-21 (MKLNPSLLTAAGLVSAQLASA) is a signal peptide. Trp-95 and Asn-207 together coordinate substrate. Residue Glu-208 is the Proton donor of the active site. Tyr-283 lines the substrate pocket. Glu-316 functions as the Nucleophile in the catalytic mechanism. N-linked (GlcNAc...) asparagine glycosylation is present at Asn-336. Trp-346 contacts substrate.

This sequence belongs to the glycosyl hydrolase 5 (cellulase A) family.

It is found in the secreted. The catalysed reaction is Random hydrolysis of (1-&gt;4)-beta-D-mannosidic linkages in mannans, galactomannans and glucomannans.. Its function is as follows. Endo-1,4-mannanase, a crucial enzyme for depolymerization of seed galactomannans and wood galactoglucomannans. In Aspergillus flavus (strain ATCC 200026 / FGSC A1120 / IAM 13836 / NRRL 3357 / JCM 12722 / SRRC 167), this protein is Probable mannan endo-1,4-beta-mannosidase A (manA).